We begin with the raw amino-acid sequence, 73 residues long: MAKEEAIEKDGEVIEALPNAQFRVRLENGHEILGLLSGKMRMNYIKILPGDRVKVEMSPYDLSKGRIVYRYKN.

Residues 1-72 (MAKEEAIEKD…SKGRIVYRYK (72 aa)) enclose the S1-like domain.

Belongs to the IF-1 family. In terms of assembly, component of the 30S ribosomal translation pre-initiation complex which assembles on the 30S ribosome in the order IF-2 and IF-3, IF-1 and N-formylmethionyl-tRNA(fMet); mRNA recruitment can occur at any time during PIC assembly.

The protein localises to the cytoplasm. Its function is as follows. One of the essential components for the initiation of protein synthesis. Stabilizes the binding of IF-2 and IF-3 on the 30S subunit to which N-formylmethionyl-tRNA(fMet) subsequently binds. Helps modulate mRNA selection, yielding the 30S pre-initiation complex (PIC). Upon addition of the 50S ribosomal subunit IF-1, IF-2 and IF-3 are released leaving the mature 70S translation initiation complex. This Salinibacter ruber (strain DSM 13855 / M31) protein is Translation initiation factor IF-1.